The primary structure comprises 323 residues: Ankyrin repeat and SOCS box protein 11 (323 aa).

6 ANK repeats span residues 64 to 93 (ADRS…NVNL), 97 to 126 (NRVS…HVNG), 130 to 159 (HGAT…KAQF), 162 to 191 (HLAS…NIDH), 195 to 224 (QLGT…SVDH), and 227 to 256 (WLDT…NLKR). One can recognise an SOCS box domain in the interval 274–323 (VEQALLLCEGPPALSQLCRLCVRKCLGRACHQAIHKLHLPEPLERFLLYQ).

This sequence belongs to the ankyrin SOCS box (ASB) family. In terms of assembly, substrate-recognition component of the ECS(ASB11) complex, composed of ASB11, CUL5, ELOB, ELOC and RNF7/RBX2.

The protein resides in the endoplasmic reticulum. It participates in protein modification; protein ubiquitination. Substrate-recognition component of a cullin-5-RING E3 ubiquitin-protein ligase complex (ECS complex, also named CRL5 complex), which mediates the ubiquitination and subsequent proteasomal degradation of target proteins, such as BIK, DIRAS2 and RPN1. The ECS(ASB11) complex acts as a regulator of the endoplasmic reticulum unfolded protein response by mediating ubiquitination and degradation of BIK. The polypeptide is Ankyrin repeat and SOCS box protein 11 (ASB11) (Pongo abelii (Sumatran orangutan)).